A 401-amino-acid chain; its full sequence is Leucine aminopeptidase 1 (401 aa).

A signal peptide spans methionine 1–alanine 18. Residues arginine 19–lysine 87 constitute a propeptide that is removed on maturation. N-linked (GlcNAc...) asparagine glycosylation is present at asparagine 179. The Zn(2+) site is built by histidine 187, aspartate 206, glutamate 245, and aspartate 272. Cysteine 321 and cysteine 325 are disulfide-bonded. Zn(2+) is bound at residue histidine 354.

This sequence belongs to the peptidase M28 family. M28E subfamily. In terms of assembly, monomer. Zn(2+) serves as cofactor.

The protein resides in the secreted. Functionally, extracellular aminopeptidase that allows assimilation of proteinaceous substrates. The protein is Leucine aminopeptidase 1 (LAP1) of Colletotrichum graminicola (strain M1.001 / M2 / FGSC 10212) (Maize anthracnose fungus).